Here is a 174-residue protein sequence, read N- to C-terminus: RNA pyrophosphohydrolase (174 aa).

Residues 6–149 enclose the Nudix hydrolase domain; the sequence is GYRPNVGIIL…KRDVYLGALK (144 aa). Residues 38–59 carry the Nudix box motif; sequence GGIKPGESPETAMYRELYEEVG.

It belongs to the Nudix hydrolase family. RppH subfamily. A divalent metal cation serves as cofactor.

Accelerates the degradation of transcripts by removing pyrophosphate from the 5'-end of triphosphorylated RNA, leading to a more labile monophosphorylated state that can stimulate subsequent ribonuclease cleavage. The protein is RNA pyrophosphohydrolase of Neisseria meningitidis serogroup C (strain 053442).